The chain runs to 466 residues: Glucose-6-phosphate 1-dehydrogenase 1 (466 aa).

NADP(+)-binding positions include Ser-48, 88–89, and Lys-141; that span reads DV. Substrate-binding residues include His-171, Lys-175, Glu-209, and Asp-228. The active-site Proton acceptor is His-233. Substrate-binding residues include Lys-319 and Lys-324.

The protein belongs to the glucose-6-phosphate dehydrogenase family.

It carries out the reaction D-glucose 6-phosphate + NADP(+) = 6-phospho-D-glucono-1,5-lactone + NADPH + H(+). It participates in carbohydrate degradation; pentose phosphate pathway; D-ribulose 5-phosphate from D-glucose 6-phosphate (oxidative stage): step 1/3. Functionally, catalyzes the oxidation of glucose 6-phosphate to 6-phosphogluconolactone. This Mycobacterium tuberculosis (strain ATCC 25618 / H37Rv) protein is Glucose-6-phosphate 1-dehydrogenase 1.